The chain runs to 245 residues: 5-oxoprolinase subunit A (245 aa).

It belongs to the LamB/PxpA family. In terms of assembly, forms a complex composed of PxpA, PxpB and PxpC.

The catalysed reaction is 5-oxo-L-proline + ATP + 2 H2O = L-glutamate + ADP + phosphate + H(+). Catalyzes the cleavage of 5-oxoproline to form L-glutamate coupled to the hydrolysis of ATP to ADP and inorganic phosphate. The sequence is that of 5-oxoprolinase subunit A from Cronobacter sakazakii (strain ATCC BAA-894) (Enterobacter sakazakii).